Reading from the N-terminus, the 630-residue chain is Transcription factor MYC1 (630 aa).

Disordered stretches follow at residues 356–398 (FGDS…NNEE) and 430–463 (VKEA…EAER). Residues 440-449 (KPRKRGRKPA) are compositionally biased toward basic residues. Basic and acidic residues predominate over residues 450-463 (NGREEPLNHVEAER). The segment at 453-466 (EEPLNHVEAERQRR) is basic motif; degenerate. The 50-residue stretch at 453–502 (EEPLNHVEAERQRREKLNQRFYALRAVVPNVSKMDKASLLGDAIAYINEL) folds into the bHLH domain. The helix-loop-helix motif stretch occupies residues 467–502 (EKLNQRFYALRAVVPNVSKMDKASLLGDAIAYINEL).

Highly expressed in trichomes and at lower levels in leaves and flowers. Expressed at low levels in roots, stems, leaves, flowers and fruits.

The protein localises to the nucleus. In terms of biological role, transcriptional activator that binds to the G-box motif (5'-AACGTG-3') found in a number of promoters of jasmonate-induced genes. Transcription activator involved in the transcriptional regulation of terpene biosynthesis in glandular trichomes. Binds to the promoter of the linalool synthase TPS5 and promotes TPS5 gene transactivation. Acts synergistically with EOT1 in the transactivation of TPS5. Involved in type VI glandular trichome development. Involved in the activation of terpene synthases required for volatile mono- and sesquiterpenes synthesis by the glandular cells of type VI trichomes. This is Transcription factor MYC1 from Solanum lycopersicum (Tomato).